The sequence spans 249 residues: MSKSKLLIGFHAVTARLRHDARSIDEIYFEANRRDRRMQDFLKAAEAAGVRMIPADNERLRGIAGTDRHQGVVAKAEALSLALNLDELLDGIEGPPLLLVLDGVTDPHNLGACLRVADAAGAHAVIAPKDRSVGINTTVAKVASGAAETVPYITVTNLARTLRELQQRGVWVIGTADEAEQDLYRADFKGPIALVMGAEGEGMRRLTRETCDTLVSIPMAGSVESLNVSVASGVCLFEAVRQRSVVPAK.

Gly197, Ile217, and Leu226 together coordinate S-adenosyl-L-methionine.

Belongs to the class IV-like SAM-binding methyltransferase superfamily. RNA methyltransferase TrmH family. RlmB subfamily.

It is found in the cytoplasm. It carries out the reaction guanosine(2251) in 23S rRNA + S-adenosyl-L-methionine = 2'-O-methylguanosine(2251) in 23S rRNA + S-adenosyl-L-homocysteine + H(+). Its function is as follows. Specifically methylates the ribose of guanosine 2251 in 23S rRNA. The protein is 23S rRNA (guanosine-2'-O-)-methyltransferase RlmB of Ralstonia nicotianae (strain ATCC BAA-1114 / GMI1000) (Ralstonia solanacearum).